Consider the following 370-residue polypeptide: Probable pectin lyase E (370 aa).

Residues Cys75 and Cys96 are joined by a disulfide bond. Arg245 is an active-site residue. A glycan (N-linked (GlcNAc...) asparagine) is linked at Asn307. Cys311 and Cys319 are oxidised to a cystine.

The protein belongs to the polysaccharide lyase 1 family.

It localises to the secreted. It catalyses the reaction Eliminative cleavage of (1-&gt;4)-alpha-D-galacturonan methyl ester to give oligosaccharides with 4-deoxy-6-O-methyl-alpha-D-galact-4-enuronosyl groups at their non-reducing ends.. Its function is as follows. Pectinolytic enzymes consist of four classes of enzymes: pectin lyase, polygalacturonase, pectin methylesterase and rhamnogalacturonase. Among pectinolytic enzymes, pectin lyase is the most important in depolymerization of pectin, since it cleaves internal glycosidic bonds of highly methylated pectins. This is Probable pectin lyase E (pelE) from Aspergillus niger.